The primary structure comprises 245 residues: Adenosylcobinamide-GDP ribazoletransferase (245 aa).

Helical transmembrane passes span 35–55 (WFPL…ALGL), 108–128 (IGAF…IGAH), 137–157 (GVLI…AALV), 176–196 (IAIG…TPVM), 197–217 (TTVT…HLAR), and 222–242 (INGD…LLAA).

It belongs to the CobS family. Mg(2+) serves as cofactor.

It is found in the cell inner membrane. It catalyses the reaction alpha-ribazole + adenosylcob(III)inamide-GDP = adenosylcob(III)alamin + GMP + H(+). It carries out the reaction alpha-ribazole 5'-phosphate + adenosylcob(III)inamide-GDP = adenosylcob(III)alamin 5'-phosphate + GMP + H(+). It functions in the pathway cofactor biosynthesis; adenosylcobalamin biosynthesis; adenosylcobalamin from cob(II)yrinate a,c-diamide: step 7/7. Its function is as follows. Joins adenosylcobinamide-GDP and alpha-ribazole to generate adenosylcobalamin (Ado-cobalamin). Also synthesizes adenosylcobalamin 5'-phosphate from adenosylcobinamide-GDP and alpha-ribazole 5'-phosphate. The chain is Adenosylcobinamide-GDP ribazoletransferase from Nitratidesulfovibrio vulgaris (strain DP4) (Desulfovibrio vulgaris).